The chain runs to 219 residues: 2-hydroxy-3-keto-5-methylthiopentenyl-1-phosphate phosphatase (219 aa).

This sequence belongs to the HAD-like hydrolase superfamily. MtnX family.

It catalyses the reaction 2-hydroxy-5-methylsulfanyl-3-oxopent-1-enyl phosphate + H2O = 1,2-dihydroxy-5-(methylsulfanyl)pent-1-en-3-one + phosphate. It participates in amino-acid biosynthesis; L-methionine biosynthesis via salvage pathway; L-methionine from S-methyl-5-thio-alpha-D-ribose 1-phosphate: step 4/6. Dephosphorylates 2-hydroxy-3-keto-5-methylthiopentenyl-1-phosphate (HK-MTPenyl-1-P) yielding 1,2-dihydroxy-3-keto-5-methylthiopentene (DHK-MTPene). The sequence is that of 2-hydroxy-3-keto-5-methylthiopentenyl-1-phosphate phosphatase from Bacillus cereus (strain ZK / E33L).